A 98-amino-acid chain; its full sequence is Large ribosomal subunit protein uL23 (98 aa).

Belongs to the universal ribosomal protein uL23 family. Part of the 50S ribosomal subunit. Contacts protein L29, and trigger factor when it is bound to the ribosome.

Functionally, one of the early assembly proteins it binds 23S rRNA. One of the proteins that surrounds the polypeptide exit tunnel on the outside of the ribosome. Forms the main docking site for trigger factor binding to the ribosome. The protein is Large ribosomal subunit protein uL23 of Nitrosococcus oceani (strain ATCC 19707 / BCRC 17464 / JCM 30415 / NCIMB 11848 / C-107).